A 732-amino-acid polypeptide reads, in one-letter code: Catalase-peroxidase (732 aa).

Residues 1 to 21 (MSMAEMRCPFSGHGAATTPAS) are disordered. The signal sequence occupies residues 1–22 (MSMAEMRCPFSGHGAATTPASA). The tryptophyl-tyrosyl-methioninium (Trp-Tyr) (with M-246) cross-link spans 97–220 (WHSAGTYRLA…LAATEMGLIY (124 aa)). The active-site Proton acceptor is H98. Residues 220-246 (YVNPEGPHGEPDPVASGREVRDTFARM) constitute a cross-link (tryptophyl-tyrosyl-methioninium (Tyr-Met) (with W-97)). H261 is a binding site for heme b.

The protein belongs to the peroxidase family. Peroxidase/catalase subfamily. Homodimer or homotetramer. Heme b serves as cofactor. Post-translationally, formation of the three residue Trp-Tyr-Met cross-link is important for the catalase, but not the peroxidase activity of the enzyme.

The enzyme catalyses H2O2 + AH2 = A + 2 H2O. It catalyses the reaction 2 H2O2 = O2 + 2 H2O. Functionally, bifunctional enzyme with both catalase and broad-spectrum peroxidase activity. This is Catalase-peroxidase from Synechococcus sp. (strain RCC307).